A 387-amino-acid polypeptide reads, in one-letter code: S-adenosylmethionine synthase (387 aa).

Histidine 15 contributes to the ATP binding site. Aspartate 17 contributes to the Mg(2+) binding site. Glutamate 43 serves as a coordination point for K(+). 2 residues coordinate L-methionine: glutamate 56 and glutamine 99. Residues 99–109 (QSPDIALGVNR) are flexible loop. ATP-binding positions include 166-168 (DAK), 232-233 (RF), aspartate 241, 247-248 (RK), alanine 264, and lysine 268. Residue aspartate 241 participates in L-methionine binding. Lysine 272 contributes to the L-methionine binding site.

It belongs to the AdoMet synthase family. Homotetramer; dimer of dimers. Requires Mg(2+) as cofactor. K(+) serves as cofactor.

The protein resides in the cytoplasm. The enzyme catalyses L-methionine + ATP + H2O = S-adenosyl-L-methionine + phosphate + diphosphate. It functions in the pathway amino-acid biosynthesis; S-adenosyl-L-methionine biosynthesis; S-adenosyl-L-methionine from L-methionine: step 1/1. In terms of biological role, catalyzes the formation of S-adenosylmethionine (AdoMet) from methionine and ATP. The overall synthetic reaction is composed of two sequential steps, AdoMet formation and the subsequent tripolyphosphate hydrolysis which occurs prior to release of AdoMet from the enzyme. In Nitrosomonas eutropha (strain DSM 101675 / C91 / Nm57), this protein is S-adenosylmethionine synthase.